Here is a 495-residue protein sequence, read N- to C-terminus: Cytochrome P450 710A1 (495 aa).

The chain crosses the membrane as a helical span at residues 5-25 (VSIFASLAPYLISAFLLFLLV). Cys434 lines the heme pocket.

It belongs to the cytochrome P450 family. The cofactor is heme. Expressed in the vascular tissues of roots, shoots and leaves. Expressed in root tips and sepals. Very low expression in stems and siliques.

It is found in the membrane. It carries out the reaction 5-dehydroepisterol + NADPH + O2 + H(+) = ergosta-5,7,22,24(28)-tetraen-3beta-ol + NADP(+) + 2 H2O. The protein operates within steroid biosynthesis; sterol biosynthesis. Its function is as follows. Required to form the C-22 double bond in the sterol side chain. Possesses in vitro C-22 desaturase activity toward beta-sitosterol and produces stigmasterol. No activity with campesterol. This chain is Cytochrome P450 710A1, found in Arabidopsis thaliana (Mouse-ear cress).